The sequence spans 178 residues: Large ribosomal subunit protein uL6 (178 aa).

The protein belongs to the universal ribosomal protein uL6 family. As to quaternary structure, part of the 50S ribosomal subunit.

In terms of biological role, this protein binds to the 23S rRNA, and is important in its secondary structure. It is located near the subunit interface in the base of the L7/L12 stalk, and near the tRNA binding site of the peptidyltransferase center. The protein is Large ribosomal subunit protein uL6 of Helicobacter pylori (strain P12).